Reading from the N-terminus, the 243-residue chain is Triosephosphate isomerase (243 aa).

Substrate is bound at residue 9 to 11 (NWK). Catalysis depends on H96, which acts as the Electrophile. E165 serves as the catalytic Proton acceptor. Substrate is bound by residues G171, S204, and 225-226 (GG).

Belongs to the triosephosphate isomerase family. As to quaternary structure, homodimer.

The protein resides in the cytoplasm. It catalyses the reaction D-glyceraldehyde 3-phosphate = dihydroxyacetone phosphate. It participates in carbohydrate biosynthesis; gluconeogenesis. Its pathway is carbohydrate degradation; glycolysis; D-glyceraldehyde 3-phosphate from glycerone phosphate: step 1/1. In terms of biological role, involved in the gluconeogenesis. Catalyzes stereospecifically the conversion of dihydroxyacetone phosphate (DHAP) to D-glyceraldehyde-3-phosphate (G3P). This is Triosephosphate isomerase from Nostoc punctiforme (strain ATCC 29133 / PCC 73102).